Consider the following 639-residue polypeptide: 1-deoxy-D-xylulose-5-phosphate synthase (639 aa).

Thiamine diphosphate is bound by residues histidine 79 and 120–122; that span reads AHS. Mg(2+) is bound at residue aspartate 151. Thiamine diphosphate contacts are provided by residues 152–153, asparagine 180, tyrosine 289, and glutamate 371; that span reads GA. Residue asparagine 180 coordinates Mg(2+).

It belongs to the transketolase family. DXPS subfamily. In terms of assembly, homodimer. Mg(2+) is required as a cofactor. The cofactor is thiamine diphosphate.

The catalysed reaction is D-glyceraldehyde 3-phosphate + pyruvate + H(+) = 1-deoxy-D-xylulose 5-phosphate + CO2. The protein operates within metabolic intermediate biosynthesis; 1-deoxy-D-xylulose 5-phosphate biosynthesis; 1-deoxy-D-xylulose 5-phosphate from D-glyceraldehyde 3-phosphate and pyruvate: step 1/1. Catalyzes the acyloin condensation reaction between C atoms 2 and 3 of pyruvate and glyceraldehyde 3-phosphate to yield 1-deoxy-D-xylulose-5-phosphate (DXP). This Allorhizobium ampelinum (strain ATCC BAA-846 / DSM 112012 / S4) (Agrobacterium vitis (strain S4)) protein is 1-deoxy-D-xylulose-5-phosphate synthase.